The primary structure comprises 534 residues: 26S proteasome non-ATPase regulatory subunit 3 (534 aa).

Basic and acidic residues predominate over residues 1–16; the sequence is MKQEGSARRRGADKAK. The tract at residues 1-69 is disordered; the sequence is MKQEGSARRR…AEHSQRELDT (69 aa). Positions 17 to 32 are enriched in pro residues; that stretch reads PPPGGGEQEPPPPPAP. Residue Lys38 forms a Glycyl lysine isopeptide (Lys-Gly) (interchain with G-Cter in SUMO1); alternate linkage. Residue Lys38 forms a Glycyl lysine isopeptide (Lys-Gly) (interchain with G-Cter in SUMO2); alternate linkage. Positions 286–465 constitute a PCI domain; that stretch reads ARYLYYTGRI…GYVQSKEMID (180 aa). Ser418 and Ser430 each carry phosphoserine. The tract at residues 500-534 is disordered; it reads SYNKDLESAEERREREQQDLEFAKEMAEDDDDSFP. A compositionally biased stretch (basic and acidic residues) spans 501-525; the sequence is YNKDLESAEERREREQQDLEFAKEM.

This sequence belongs to the proteasome subunit S3 family. As to quaternary structure, component of the 19S proteasome regulatory particle complex. The 26S proteasome consists of a 20S core particle (CP) and two 19S regulatory subunits (RP). The regulatory particle is made of a lid composed of 9 subunits including PSMD3, a base containing 6 ATPases and few additional components. Interacts with UBQLN1 (via ubiquitin-like domain). Interacts with ERCC6.

Component of the 26S proteasome, a multiprotein complex involved in the ATP-dependent degradation of ubiquitinated proteins. This complex plays a key role in the maintenance of protein homeostasis by removing misfolded or damaged proteins, which could impair cellular functions, and by removing proteins whose functions are no longer required. Therefore, the proteasome participates in numerous cellular processes, including cell cycle progression, apoptosis, or DNA damage repair. The protein is 26S proteasome non-ATPase regulatory subunit 3 (PSMD3) of Homo sapiens (Human).